Here is a 149-residue protein sequence, read N- to C-terminus: MSAYWIAVASAQHVRRGRNDGFMQVNHGKAAPLRRVKPGDGIVYYSPTTILGEKDGLQAFTAIGTVRYGKESPYQGEMGGGFTPFRRDVEWAVAEEAPIKPLLDRLDFTAGKSNWGYHLRFGLFEITDHDFRLIAEAMGAPKTLAEATA.

It belongs to the UPF0310 family.

The polypeptide is UPF0310 protein msl3206 (Mesorhizobium japonicum (strain LMG 29417 / CECT 9101 / MAFF 303099) (Mesorhizobium loti (strain MAFF 303099))).